Reading from the N-terminus, the 700-residue chain is Elongation factor G (700 aa).

The tr-type G domain occupies 8 to 290 (SLYRNIGISA…AVIDYLPAPT (283 aa)). Residues 17-24 (AHIDAGKT), 88-92 (DTPGH), and 142-145 (NKMD) each bind GTP.

The protein belongs to the TRAFAC class translation factor GTPase superfamily. Classic translation factor GTPase family. EF-G/EF-2 subfamily.

The protein resides in the cytoplasm. Its function is as follows. Catalyzes the GTP-dependent ribosomal translocation step during translation elongation. During this step, the ribosome changes from the pre-translocational (PRE) to the post-translocational (POST) state as the newly formed A-site-bound peptidyl-tRNA and P-site-bound deacylated tRNA move to the P and E sites, respectively. Catalyzes the coordinated movement of the two tRNA molecules, the mRNA and conformational changes in the ribosome. This Histophilus somni (strain 129Pt) (Haemophilus somnus) protein is Elongation factor G.